We begin with the raw amino-acid sequence, 228 residues long: Large ribosomal subunit protein uL3 (228 aa).

Belongs to the universal ribosomal protein uL3 family. As to quaternary structure, part of the 50S ribosomal subunit. Forms a cluster with proteins L14 and L19.

One of the primary rRNA binding proteins, it binds directly near the 3'-end of the 23S rRNA, where it nucleates assembly of the 50S subunit. The chain is Large ribosomal subunit protein uL3 from Leuconostoc mesenteroides subsp. mesenteroides (strain ATCC 8293 / DSM 20343 / BCRC 11652 / CCM 1803 / JCM 6124 / NCDO 523 / NBRC 100496 / NCIMB 8023 / NCTC 12954 / NRRL B-1118 / 37Y).